A 131-amino-acid chain; its full sequence is Ribonuclease VapC42 (131 aa).

The region spanning 1 to 125 is the PINc domain; the sequence is MIVDTSAIVA…FRGDDFTHTD (125 aa). Residues Asp-4 and Asp-100 each contribute to the Mg(2+) site.

Belongs to the PINc/VapC protein family. It depends on Mg(2+) as a cofactor.

In terms of biological role, toxic component of a type II toxin-antitoxin (TA) system. An RNase. Its cognate antitoxin is VapB42. This is Ribonuclease VapC42 from Mycobacterium tuberculosis (strain CDC 1551 / Oshkosh).